An 865-amino-acid chain; its full sequence is Xylosyltransferase 2 (865 aa).

Residues 1–15 lie on the Cytoplasmic side of the membrane; that stretch reads MVASARVQKLVRRYK. The chain crosses the membrane as a helical; Signal-anchor for type II membrane protein span at residues 16 to 36; the sequence is LAIATALAILLLQGLVVWSFS. At 37–865 the chain is on the lumenal side; the sequence is GLEEDEAGEK…GPVKADGRLR (829 aa). The segment at 41–157 is disordered; sequence DEAGEKGRQR…EGAPQPTDNG (117 aa). Positions 53 to 65 are enriched in basic and acidic residues; it reads RPLDPGEGSKDTD. A compositionally biased stretch (basic residues) spans 73 to 82; it reads STGRRHGRWR. Residue N122 is glycosylated (N-linked (GlcNAc...) asparagine). Residues 125–137 are compositionally biased toward low complexity; that stretch reads GAAAGEALVGAAG. 4 disulfide bridges follow: C162/C190, C206/C448, C467/C480, and C469/C478. Residues V239, D267, and 296 to 298 contribute to the UDP-alpha-D-xylose site; that span reads TIW. The N-linked (GlcNAc...) asparagine glycan is linked to N327. 400–401 provides a ligand contact to UDP-alpha-D-xylose; it reads DW. Residues S481 and 504 to 505 each bind UDP-alpha-D-xylose; that span reads RK. Intrachain disulfides connect C581/C833 and C826/C839. N683 carries N-linked (GlcNAc...) asparagine glycosylation. Residues 846-865 form a disordered region; it reads SLSPDPKSELGPVKADGRLR.

It belongs to the glycosyltransferase 14 family. XylT subfamily. Monomer. It depends on Mg(2+) as a cofactor. The cofactor is Mn(2+). Post-translationally, contains disulfide bonds. Widely expressed. Expressed at higher level in kidney and pancreas.

It is found in the golgi apparatus membrane. The protein localises to the secreted. The enzyme catalyses UDP-alpha-D-xylose + L-seryl-[protein] = 3-O-(beta-D-xylosyl)-L-seryl-[protein] + UDP + H(+). The protein operates within glycan metabolism; chondroitin sulfate biosynthesis. It participates in glycan metabolism; heparan sulfate biosynthesis. Functionally, catalyzes the first step in the biosynthesis of chondroitin sulfate, heparan sulfate and dermatan sulfate proteoglycans, such as DCN. Transfers D-xylose from UDP-D-xylose to specific serine residues of the core protein. In Homo sapiens (Human), this protein is Xylosyltransferase 2 (XYLT2).